Consider the following 698-residue polypeptide: Elongation factor G 1 (698 aa).

The tr-type G domain maps to 8–290; the sequence is ERYRNIGICA…AVVEFLPAPV (283 aa). GTP contacts are provided by residues 17 to 24, 88 to 92, and 142 to 145; these read AHVDAGKT, DTPGH, and NKMD.

The protein belongs to the TRAFAC class translation factor GTPase superfamily. Classic translation factor GTPase family. EF-G/EF-2 subfamily.

It is found in the cytoplasm. Its function is as follows. Catalyzes the GTP-dependent ribosomal translocation step during translation elongation. During this step, the ribosome changes from the pre-translocational (PRE) to the post-translocational (POST) state as the newly formed A-site-bound peptidyl-tRNA and P-site-bound deacylated tRNA move to the P and E sites, respectively. Catalyzes the coordinated movement of the two tRNA molecules, the mRNA and conformational changes in the ribosome. The polypeptide is Elongation factor G 1 (Shewanella oneidensis (strain ATCC 700550 / JCM 31522 / CIP 106686 / LMG 19005 / NCIMB 14063 / MR-1)).